The chain runs to 175 residues: Nucleoside triphosphate/diphosphate phosphatase (175 aa).

The active-site Proton donor is the Arg-23. The Mg(2+) site is built by Asn-87, Asp-103, Asp-105, Asp-107, Asp-120, and Glu-123.

Belongs to the Ntdp family. Requires Mg(2+) as cofactor.

It catalyses the reaction a ribonucleoside 5'-triphosphate + H2O = a ribonucleoside 5'-diphosphate + phosphate + H(+). The enzyme catalyses a ribonucleoside 5'-diphosphate + H2O = a ribonucleoside 5'-phosphate + phosphate + H(+). Its function is as follows. Has nucleoside phosphatase activity towards nucleoside triphosphates and nucleoside diphosphates. The polypeptide is Nucleoside triphosphate/diphosphate phosphatase (Listeria monocytogenes serotype 4b (strain CLIP80459)).